Reading from the N-terminus, the 284-residue chain is Rhomboid-type serine protease 2 (284 aa).

The next 6 helical transmembrane spans lie at 17 to 37, 66 to 86, 98 to 118, 124 to 141, 160 to 180, and 182 to 202; these read PPAL…IKSV, FHVN…PLAV, VTLN…GLIF, VIGL…MAYH, IKLY…ILFP, and SSLP…YGYI. The active-site Nucleophile is S128. H187 is an active-site residue.

Belongs to the peptidase S54 family.

The protein localises to the golgi apparatus membrane. It is found in the golgi apparatus. Its subcellular location is the cis-Golgi network membrane. It carries out the reaction Cleaves type-1 transmembrane domains using a catalytic dyad composed of serine and histidine that are contributed by different transmembrane domains.. Probable rhomboid-type serine protease that catalyzes intramembrane proteolysis. This Candida albicans (strain SC5314 / ATCC MYA-2876) (Yeast) protein is Rhomboid-type serine protease 2 (RBD2).